We begin with the raw amino-acid sequence, 378 residues long: tRNA (guanine(26)-N(2))-dimethyltransferase (378 aa).

In terms of domain architecture, Trm1 methyltransferase spans 4–374; sequence KEVTEGKVRI…KGYEEIIRCV (371 aa). Positions 44, 69, 87, 114, and 115 each coordinate S-adenosyl-L-methionine. Zn(2+)-binding residues include C246, C249, C263, and C266.

It belongs to the class I-like SAM-binding methyltransferase superfamily. Trm1 family.

It carries out the reaction guanosine(26) in tRNA + 2 S-adenosyl-L-methionine = N(2)-dimethylguanosine(26) in tRNA + 2 S-adenosyl-L-homocysteine + 2 H(+). Dimethylates a single guanine residue at position 26 of a number of tRNAs using S-adenosyl-L-methionine as donor of the methyl groups. This is tRNA (guanine(26)-N(2))-dimethyltransferase from Saccharolobus islandicus (strain Y.G.57.14 / Yellowstone #1) (Sulfolobus islandicus).